Consider the following 202-residue polypeptide: NADH-quinone oxidoreductase subunit B (202 aa).

4 residues coordinate [4Fe-4S] cluster: Cys81, Cys82, Cys146, and Cys176.

It belongs to the complex I 20 kDa subunit family. In terms of assembly, NDH-1 is composed of 14 different subunits. Subunits NuoB, C, D, E, F, and G constitute the peripheral sector of the complex. Requires [4Fe-4S] cluster as cofactor.

It localises to the cell inner membrane. The enzyme catalyses a quinone + NADH + 5 H(+)(in) = a quinol + NAD(+) + 4 H(+)(out). Its function is as follows. NDH-1 shuttles electrons from NADH, via FMN and iron-sulfur (Fe-S) centers, to quinones in the respiratory chain. The immediate electron acceptor for the enzyme in this species is believed to be ubiquinone. Couples the redox reaction to proton translocation (for every two electrons transferred, four hydrogen ions are translocated across the cytoplasmic membrane), and thus conserves the redox energy in a proton gradient. The protein is NADH-quinone oxidoreductase subunit B of Bradyrhizobium diazoefficiens (strain JCM 10833 / BCRC 13528 / IAM 13628 / NBRC 14792 / USDA 110).